The primary structure comprises 91 residues: UPF0250 protein PP_4802 (91 aa).

Belongs to the UPF0250 family.

The chain is UPF0250 protein PP_4802 from Pseudomonas putida (strain ATCC 47054 / DSM 6125 / CFBP 8728 / NCIMB 11950 / KT2440).